Consider the following 159-residue polypeptide: Ribosomal RNA large subunit methyltransferase H (159 aa).

Residues Leu-76, Gly-108, and 127–132 (FSKMTF) contribute to the S-adenosyl-L-methionine site.

Belongs to the RNA methyltransferase RlmH family. As to quaternary structure, homodimer.

It is found in the cytoplasm. The enzyme catalyses pseudouridine(1915) in 23S rRNA + S-adenosyl-L-methionine = N(3)-methylpseudouridine(1915) in 23S rRNA + S-adenosyl-L-homocysteine + H(+). Functionally, specifically methylates the pseudouridine at position 1915 (m3Psi1915) in 23S rRNA. In Staphylococcus aureus (strain MSSA476), this protein is Ribosomal RNA large subunit methyltransferase H.